A 585-amino-acid chain; its full sequence is Arginine--tRNA ligase (585 aa).

Positions 131-141 (ANPTGPMHVGH) match the 'HIGH' region motif.

This sequence belongs to the class-I aminoacyl-tRNA synthetase family. As to quaternary structure, monomer.

It is found in the cytoplasm. It catalyses the reaction tRNA(Arg) + L-arginine + ATP = L-arginyl-tRNA(Arg) + AMP + diphosphate. In Sinorhizobium medicae (strain WSM419) (Ensifer medicae), this protein is Arginine--tRNA ligase.